A 373-amino-acid polypeptide reads, in one-letter code: Valienol-1-phosphate guanylyltransferase (373 aa).

Substrate is bound by residues G177 and 192–193 (EK).

Belongs to the bacterial/plant glucose-1-phosphate adenylyltransferase family. Requires Mg(2+) as cofactor.

It catalyses the reaction valienol 1-phosphate + GTP + H(+) = GDP-valienol + diphosphate. Involved in the biosynthesis of the antifungal agent validamycin A. Catalyzes the conversion of valienol 1-phosphate to GDP-valienol and less effectively to ADP-valienol or other NDP derivatives. The protein is Valienol-1-phosphate guanylyltransferase of Streptomyces hygroscopicus subsp. limoneus.